Reading from the N-terminus, the 285-residue chain is Malonyl-[acyl-carrier protein] O-methyltransferase (285 aa).

The protein belongs to the methyltransferase superfamily.

It carries out the reaction malonyl-[ACP] + S-adenosyl-L-methionine = malonyl-[ACP] methyl ester + S-adenosyl-L-homocysteine. It functions in the pathway cofactor biosynthesis; biotin biosynthesis. Converts the free carboxyl group of a malonyl-thioester to its methyl ester by transfer of a methyl group from S-adenosyl-L-methionine (SAM). It allows to synthesize pimeloyl-ACP via the fatty acid synthetic pathway. This is Malonyl-[acyl-carrier protein] O-methyltransferase from Bacillus cytotoxicus (strain DSM 22905 / CIP 110041 / 391-98 / NVH 391-98).